The primary structure comprises 152 residues: MEKLEVGQLAPDFRLKNSDGVEISLKDLLHKKVVLYFYPKDNTPGCTLEAKDFSALFSEFEKKNAVVVGISPDNAQSHQKFISQCSLNVILLCDEDKKAANLYKAYGKRMLYGKEHLGIIRSTFIINTQGVLEKCFYNVKAKGHAQKVLESL.

The Thioredoxin domain occupies 4 to 152 (LEVGQLAPDF…GHAQKVLESL (149 aa)). The active-site Cysteine sulfenic acid (-SOH) intermediate is the C46. A disulfide bridge connects residues C46 and C85.

The protein belongs to the peroxiredoxin family. BCP/PrxQ subfamily. In terms of assembly, monomer.

It catalyses the reaction a hydroperoxide + [thioredoxin]-dithiol = an alcohol + [thioredoxin]-disulfide + H2O. Functionally, thiol-specific peroxidase that catalyzes the reduction of hydrogen peroxide and organic hydroperoxides to water and alcohols, respectively. Plays a role in cell protection against oxidative stress by detoxifying peroxides and as sensor of hydrogen peroxide-mediated signaling events. The protein is Putative peroxiredoxin bcp (bcp) of Helicobacter pylori (strain ATCC 700392 / 26695) (Campylobacter pylori).